The chain runs to 528 residues: Neuronal acetylcholine receptor subunit alpha-2 (528 aa).

A signal peptide spans 1–23 (MGWPCRSIIPLLVWCFVTLQAAT). Topologically, residues 24 to 239 (REQKQPHGFA…ITFYFVIRRL (216 aa)) are extracellular. Asn-54 and Asn-104 each carry an N-linked (GlcNAc...) asparagine glycan. 2 cysteine pairs are disulfide-bonded: Cys-158–Cys-172 and Cys-222–Cys-223. Helical transmembrane passes span 240 to 264 (PLFY…VFYL), 272 to 290 (ITLC…LLIT), and 306 to 327 (YLLF…VLNV). Residues 328 to 501 (HHRSPSTHTM…WKYVAMVIDR (174 aa)) lie on the Cytoplasmic side of the membrane. Positions 390 to 410 (DDKWEEEEEEEEEEEEEEEEE) are enriched in acidic residues. Positions 390-427 (DDKWEEEEEEEEEEEEEEEEEKAYPSRVPSGGSQGTQC) are disordered. The chain crosses the membrane as a helical span at residues 502 to 520 (IFLWMFIIVCLLGTVGLFL).

It belongs to the ligand-gated ion channel (TC 1.A.9) family. Acetylcholine receptor (TC 1.A.9.1) subfamily. Alpha-2/CHRNA2 sub-subfamily. In terms of assembly, neuronal AChR is composed of two different types of subunits: alpha and non-alpha (beta). CHRNA2/alpha-2 subunit can be combined to CHRNB2/beta-2 or CHRNB4/beta-4 to give rise to functional receptors. Both CHRNA2:CHRNB2 and CHRNA2:CHRNB4 nAChR complexes are heteropentamers with two subtypes: LS (low agonist sensitivity) with a (CHRNA2)3:(CHRNB2/4)2 and HS (high agonist sensitivity) with a (CHRNA2)2:(CHRNB2/4)3 stoichiometries; the subtypes differ in their subunit binding interfaces which are involved in ligand binding.

It localises to the synaptic cell membrane. The protein resides in the cell membrane. It carries out the reaction Ca(2+)(in) = Ca(2+)(out). It catalyses the reaction K(+)(in) = K(+)(out). The catalysed reaction is Na(+)(in) = Na(+)(out). Its function is as follows. Component of neuronal acetylcholine receptors (nAChRs) that function as pentameric, ligand-gated cation channels with high calcium permeability among other activities. nAChRs are excitatory neurotrasnmitter receptors formed by a collection of nAChR subunits known to mediate synaptic transmission in the nervous system and the neuromuscular junction. Each nAchR subunit confers differential attributes to channel properties, including activation, deactivation and desensitization kinetics, pH sensitivity, cation permeability, and binding to allosteric modulators. CHRNA2 forms heteropentameric neuronal acetylcholine receptors with CHRNB2 and CHRNB4 and plays a role in nicotine dependence. The protein is Neuronal acetylcholine receptor subunit alpha-2 (CHRNA2) of Gallus gallus (Chicken).